The sequence spans 636 residues: Putative ankyrin repeat protein L766 (636 aa).

ANK repeat units follow at residues 63–97, 99–129, 130–159, 161–190, 230–259, 261–284, 322–355, 372–400, 425–455, 517–546, and 548–575; these read NNYL…DYEL, STCH…YIDS, FGNI…FFNC, YYYL…KSNN, FDEK…NYDF, TIIN…YLTD, SRII…KTSI, NPDE…NIPD, DSLE…DTTI, NSIE…NDNN, and LSWA…DIYQ.

This chain is Putative ankyrin repeat protein L766, found in Acanthamoeba polyphaga mimivirus (APMV).